The primary structure comprises 586 residues: MTTPAGSGTGYGSVSWWGLSPALDLQAESPPVDPDSQSKTERKVPELDALLLGSVDGRHMLRTLARAALWPLRSFNFYVLENNLEAVARHMLIFSLALEEPEKMGLQERSETFLELWGNALLRPSVAAFLRAQASHLANLVLEPDRLEEQLPWLSLRLLKFRERDALEAVFRFWSGGEKGPEVFPMSRLWDSRLRHYLGSRYDARRGVADWDLRMKLHDRGAQVIHIQEFRRWRDTGVAFELRDLSAYHVPNRTLASGRLLSHRGERVAARGYWGDIATGPFMAFGIEADDQSLLRTRNGQPVKTASEITQHNVTELFREVAAWRGPRAIQGNVEETESPEPDVPAQEPFTIHFLPLDSSQTLHHKTCYQGRFQLLYVSCGMVHLLSPELGACVAPGGNLVVELARYLVDLRPKELKAFSDRVVEIARVAGFAPHTATKPSETFARFYKLGDSTPGGGDSAVESGPAPSKVESTRAPLPESISPPQANQAPSLEAMSPPLADLAPPLETMCPPQANQAPPLEALSPSKADQIPPLEAMSPPQAKLVLPVEAISLPQADLASPPEVISPLQEAMATSWVNAPPKHVT.

Residues 455–493 form a disordered region; sequence PGGGDSAVESGPAPSKVESTRAPLPESISPPQANQAPSL.

This sequence belongs to the DNAAF3 family.

It is found in the cytoplasm. Its subcellular location is the dynein axonemal particle. Functionally, required for the assembly of axonemal inner and outer dynein arms. Involved in preassembly of dyneins into complexes before their transport into cilia. The sequence is that of Dynein axonemal assembly factor 3 (Dnaaf3) from Mus musculus (Mouse).